The chain runs to 662 residues: Carboxysome assembly protein CsoS2 (662 aa).

Positions 1–227 (MSTSNAQSGR…KRRNAKEAPQ (227 aa)) are N-terminal domain. 3 disordered regions span residues 1–258 (MSTS…SESG), 277–322 (NCDV…TCSA), and 342–419 (PAKS…RGSC). An N-repeat 1 repeat occupies 8 to 27 (SGRAAAIARRNAQVKGKGYT). Composition is skewed to low complexity over residues 28-57 (ASAA…SQPS) and 64-76 (SVAP…ASAA). One copy of the N-repeat 2 repeat lies at 58 to 72 (RSRRKVSVAPTATPA). Over residues 120–135 (RQAKAEKPTKRSERRT) the composition is skewed to basic and acidic residues. The segment covering 141 to 150 (VASQQPSGRL) has biased composition (polar residues). The stretch at 147-168 (SGRLQSKAYRKAQAKGKAGQEA) is one N-repeat 3 repeat. Low complexity-rich tracts occupy residues 161–170 (KGKAGQEAFK), 237–247 (GQSVSGTQVGQ), and 289–300 (VTQTQTTRGQVV). M-repeat repeat units follow at residues 228–278 (KVGE…SKNC), 288–338 (KVTQ…KMYC), 388–436 (KVMP…AKAC), 446–491 (KVTA…TEQF), and 496–550 (VDEQ…AMVC). The segment at 228-559 (KVGESQTLHG…CDSTNAAAPG (332 aa)) is middle region. The span at 391 to 404 (PSQTAKGNTTTGSQ) shows a compositional bias: polar residues. The segment at 560–631 (ESDFPAMIGQ…SPMGASQYRP (72 aa)) is C-terminal domain. The stretch at 564-572 (PAMIGQAQP) is one C-repeat 1 repeat. 2 disordered regions span residues 588 to 607 (KITG…DGPW) and 619 to 662 (AGQS…GARA). A C-terminal peptide region spans residues 632–662 (VNNEVPMSPITGSSGNTDTGAKVTLSGGARA). Over residues 641-650 (ITGSSGNTDT) the composition is skewed to polar residues.

It belongs to the CsoS2 family. As to quaternary structure, interacts via its N-terminal repeats with RuBisCO. Interacts with the major shell protein CsoS1. Post-translationally, unlike H.neapolitanus and predictions for P.marinus strain MIT 9313, this protein is not thought to have ribosomal frameshifting.

Its subcellular location is the carboxysome. Its function is as follows. Required for alpha-carboxysome (Cb) assembly, mediates interaction between RuBisCO and the Cb shell. The protein is probably intrinsically disordered. The C-terminal repeats act as the encapsulation signal to target proteins to the Cb; they are necessary and sufficient to target both CsoS2 and foreign proteins to the Cb. The N-terminal repeats of this protein bind simultaneously to both subunits of RuBisCO. Probably also interacts with the major shell proteins (CsoS1); that interaction would increase the local concentration of CsoS2 so that it can condense RuBisCO and full carboxysomes can be formed. The chain is Carboxysome assembly protein CsoS2 from Hydrogenovibrio crunogenus (strain DSM 25203 / XCL-2) (Thiomicrospira crunogena).